Reading from the N-terminus, the 80-residue chain is Exodeoxyribonuclease 7 small subunit (80 aa).

This sequence belongs to the XseB family. In terms of assembly, heterooligomer composed of large and small subunits.

The protein localises to the cytoplasm. The enzyme catalyses Exonucleolytic cleavage in either 5'- to 3'- or 3'- to 5'-direction to yield nucleoside 5'-phosphates.. Functionally, bidirectionally degrades single-stranded DNA into large acid-insoluble oligonucleotides, which are then degraded further into small acid-soluble oligonucleotides. This chain is Exodeoxyribonuclease 7 small subunit, found in Halalkalibacterium halodurans (strain ATCC BAA-125 / DSM 18197 / FERM 7344 / JCM 9153 / C-125) (Bacillus halodurans).